Reading from the N-terminus, the 217-residue chain is MEHSSWHALIKAQLPEGYFGKINQFMNQVYVQGTVYPPKEKVFQALLTTPLEEVKVVILGQDPYHGPGQAQGLSFSVPDSIPAPPSLQNILKELSDDLGVKKSHDLTAWAEQGVLLLNACLTVPAGQANGHAGQIWEPFTDAVIQVVNHLDRPVVFVLWGAYARKKKALVTNPHHLIIESAHPSPLSVYRGFWGSKPFSKANAFLKETGQEPIDWLR.

Residue D62 is the Proton acceptor of the active site.

The protein belongs to the uracil-DNA glycosylase (UDG) superfamily. UNG family.

Its subcellular location is the cytoplasm. The enzyme catalyses Hydrolyzes single-stranded DNA or mismatched double-stranded DNA and polynucleotides, releasing free uracil.. Its function is as follows. Excises uracil residues from the DNA which can arise as a result of misincorporation of dUMP residues by DNA polymerase or due to deamination of cytosine. This is Uracil-DNA glycosylase from Streptococcus pneumoniae (strain Hungary19A-6).